Here is a 269-residue protein sequence, read N- to C-terminus: 4-hydroxy-tetrahydrodipicolinate reductase (269 aa).

Residues 11 to 16 (GASGRM) and E37 each bind NAD(+). Residue R38 participates in NADP(+) binding. NAD(+)-binding positions include 101–103 (GTT) and 125–128 (AGNM). Residue H158 is the Proton donor/acceptor of the active site. Residue H159 coordinates (S)-2,3,4,5-tetrahydrodipicolinate. Catalysis depends on K162, which acts as the Proton donor. Position 168-169 (168-169 (GT)) interacts with (S)-2,3,4,5-tetrahydrodipicolinate.

It belongs to the DapB family.

It localises to the cytoplasm. The enzyme catalyses (S)-2,3,4,5-tetrahydrodipicolinate + NAD(+) + H2O = (2S,4S)-4-hydroxy-2,3,4,5-tetrahydrodipicolinate + NADH + H(+). It catalyses the reaction (S)-2,3,4,5-tetrahydrodipicolinate + NADP(+) + H2O = (2S,4S)-4-hydroxy-2,3,4,5-tetrahydrodipicolinate + NADPH + H(+). It participates in amino-acid biosynthesis; L-lysine biosynthesis via DAP pathway; (S)-tetrahydrodipicolinate from L-aspartate: step 4/4. In terms of biological role, catalyzes the conversion of 4-hydroxy-tetrahydrodipicolinate (HTPA) to tetrahydrodipicolinate. The protein is 4-hydroxy-tetrahydrodipicolinate reductase of Ruegeria pomeroyi (strain ATCC 700808 / DSM 15171 / DSS-3) (Silicibacter pomeroyi).